Here is a 122-residue protein sequence, read N- to C-terminus: UPF0145 protein TV0671 (122 aa).

It belongs to the UPF0145 family.

This Thermoplasma volcanium (strain ATCC 51530 / DSM 4299 / JCM 9571 / NBRC 15438 / GSS1) protein is UPF0145 protein TV0671.